The chain runs to 462 residues: ATP synthase subunit beta (462 aa).

ATP is bound at residue 152–159; sequence GGAGVGKT.

Belongs to the ATPase alpha/beta chains family. As to quaternary structure, F-type ATPases have 2 components, CF(1) - the catalytic core - and CF(0) - the membrane proton channel. CF(1) has five subunits: alpha(3), beta(3), gamma(1), delta(1), epsilon(1). CF(0) has three main subunits: a(1), b(2) and c(9-12). The alpha and beta chains form an alternating ring which encloses part of the gamma chain. CF(1) is attached to CF(0) by a central stalk formed by the gamma and epsilon chains, while a peripheral stalk is formed by the delta and b chains.

The protein resides in the cell inner membrane. The enzyme catalyses ATP + H2O + 4 H(+)(in) = ADP + phosphate + 5 H(+)(out). Produces ATP from ADP in the presence of a proton gradient across the membrane. The catalytic sites are hosted primarily by the beta subunits. The chain is ATP synthase subunit beta from Tolumonas auensis (strain DSM 9187 / NBRC 110442 / TA 4).